Here is a 228-residue protein sequence, read N- to C-terminus: Cytidylate kinase (228 aa).

Residue 17–25 participates in ATP binding; it reads GPTASGKGT.

This sequence belongs to the cytidylate kinase family. Type 1 subfamily.

The protein resides in the cytoplasm. It catalyses the reaction CMP + ATP = CDP + ADP. The enzyme catalyses dCMP + ATP = dCDP + ADP. In Burkholderia ambifaria (strain ATCC BAA-244 / DSM 16087 / CCUG 44356 / LMG 19182 / AMMD) (Burkholderia cepacia (strain AMMD)), this protein is Cytidylate kinase.